The primary structure comprises 214 residues: MRIILLGAPGAGKGTQAQFIMDKYGIPQISTGDMLRAAIKAGTELGKQAKSVIDAGQLVSDEIILGLVKERIAQEDCAKGFLLDGFPRTIPQADGLKENGVSIDYVLEFDVADEVIVERMSGRRAHLPSGRTYHVVYNPPKEEGKDDETGEPLVIREDDKPETVLARLGIYHEQTAPLIAYYNKEAEAGNTKYLKFDGTKLVAEVSAEIEKALA.

10–15 (GAGKGT) serves as a coordination point for ATP. Residues 30–59 (STGDMLRAAIKAGTELGKQAKSVIDAGQLV) form an NMP region. AMP-binding positions include Thr-31, Arg-36, 57–59 (QLV), 85–88 (GFPR), and Gln-92. Residues 122–159 (GRRAHLPSGRTYHVVYNPPKEEGKDDETGEPLVIREDD) form an LID region. ATP is bound by residues Arg-123 and 132 to 133 (TY). AMP-binding residues include Arg-156 and Arg-167. Position 200 (Lys-200) interacts with ATP.

Belongs to the adenylate kinase family. Monomer.

The protein resides in the cytoplasm. It carries out the reaction AMP + ATP = 2 ADP. Its pathway is purine metabolism; AMP biosynthesis via salvage pathway; AMP from ADP: step 1/1. Its function is as follows. Catalyzes the reversible transfer of the terminal phosphate group between ATP and AMP. Plays an important role in cellular energy homeostasis and in adenine nucleotide metabolism. The polypeptide is Adenylate kinase (Aliivibrio fischeri (strain ATCC 700601 / ES114) (Vibrio fischeri)).